A 647-amino-acid chain; its full sequence is DNA mismatch repair protein MutL (647 aa).

It belongs to the DNA mismatch repair MutL/HexB family.

This protein is involved in the repair of mismatches in DNA. It is required for dam-dependent methyl-directed DNA mismatch repair. May act as a 'molecular matchmaker', a protein that promotes the formation of a stable complex between two or more DNA-binding proteins in an ATP-dependent manner without itself being part of a final effector complex. The sequence is that of DNA mismatch repair protein MutL from Bacillus cereus (strain G9842).